Reading from the N-terminus, the 395-residue chain is Guanine nucleotide-binding protein subunit beta-5 (395 aa).

7 WD repeats span residues 103–142 (GHGN…KEHA), 145–184 (MPCT…NENM), 193–234 (MHTN…QSFH), 236–278 (HGAD…QAFE), 279–318 (THES…EVAI), 320–362 (SKES…RVSI), and 365–394 (GHEN…LRVW).

Belongs to the WD repeat G protein beta family. As to quaternary structure, component of a complex composed of RGS9 (isoform RGS9-1), GNB5 and RGS9BP; within this complex, the presence of GNB5 stabilizes both itself and RGS9 and increases RGS9 GTPase-activating protein (GAP) activity. Interacts with RGS7, forming the RGS7-GNB5 complex; within this complex, the presence of GNB5 increases RGS7 GTPase-activating protein (GAP) activity. Interacts with GPR158; promotes the GTPase activator activity of the RGS7-GNB5 complex in absence of glycine, in contrast GTPase activator activity of the RGS7-GNB5 complex is inhibited in presence of glycine. Interacts with RGS6. As to expression, widely expressed.

The protein localises to the membrane. Its function is as follows. Enhances GTPase-activating protein (GAP) activity of regulator of G protein signaling (RGS) proteins, such as RGS7 and RGS9, hence involved in the termination of the signaling initiated by the G protein coupled receptors (GPCRs) by accelerating the GTP hydrolysis on the G-alpha subunits, thereby promoting their inactivation. Increases RGS7 GTPase-activating protein (GAP) activity, thereby regulating mood and cognition. Increases RGS9 GTPase-activating protein (GAP) activity, hence contributes to the deactivation of G protein signaling initiated by D(2) dopamine receptors. May play an important role in neuronal signaling, including in the parasympathetic, but not sympathetic, control of heart rate. The chain is Guanine nucleotide-binding protein subunit beta-5 (GNB5) from Homo sapiens (Human).